Consider the following 488-residue polypeptide: NADH-ubiquinone oxidoreductase chain 2 (488 aa).

The next 14 membrane-spanning stretches (helical) occupy residues 4–24 (LFLA…LLIH), 45–65 (WLGL…APLL), 84–104 (FCQI…FDFF), 111–131 (AFEF…MISA), 134–154 (LIAM…LAAS), 168–188 (YLIL…MIYG), 215–235 (IFMG…AVPF), 252–272 (AFLS…VFIY), 282–302 (IFFF…MAQT), 308–328 (LAYS…CGTI), 334–354 (LLIG…IVLA), 375–395 (ILAI…PLAG), 400–420 (FYLF…VGVV), and 456–476 (LLLA…SPLF).

The protein belongs to the complex I subunit 2 family.

It is found in the mitochondrion inner membrane. It carries out the reaction a ubiquinone + NADH + 5 H(+)(in) = a ubiquinol + NAD(+) + 4 H(+)(out). Its function is as follows. Core subunit of the mitochondrial membrane respiratory chain NADH dehydrogenase (Complex I) that is believed to belong to the minimal assembly required for catalysis. Complex I functions in the transfer of electrons from NADH to the respiratory chain. The immediate electron acceptor for the enzyme is believed to be ubiquinone. The chain is NADH-ubiquinone oxidoreductase chain 2 (ND2) from Oenothera berteroana (Bertero's evening primrose).